Consider the following 51-residue polypeptide: Large ribosomal subunit protein bL33 (51 aa).

The tract at residues 1–21 is disordered; sequence MRDKIKLESSAGTGHFYTTTK. The span at 10–20 shows a compositional bias: polar residues; sequence SAGTGHFYTTT.

The protein belongs to the bacterial ribosomal protein bL33 family.

The chain is Large ribosomal subunit protein bL33 (rpmG) from Neisseria meningitidis serogroup A / serotype 4A (strain DSM 15465 / Z2491).